Consider the following 230-residue polypeptide: Cytochrome c oxidase subunit 2 (230 aa).

Residues 1-14 are Mitochondrial intermembrane-facing; it reads MAHPAQLGFQDAAS. The helical transmembrane segment at 15–45 threads the bilayer; the sequence is PVMEELLCFHDHALMIVFLISTLVLYIIIAM. Topologically, residues 46-59 are mitochondrial matrix; that stretch reads VSTKLTNKFILDSQ. Residues 60–87 form a helical membrane-spanning segment; sequence EIEIVWTVLPAIILILIALPSLRILYLM. Residues 88–230 are Mitochondrial intermembrane-facing; the sequence is DEINDPHVTI…NWSSAMLEDA (143 aa). H161, C196, E198, C200, H204, and M207 together coordinate Cu cation. E198 serves as a coordination point for Mg(2+).

It belongs to the cytochrome c oxidase subunit 2 family. As to quaternary structure, component of the cytochrome c oxidase (complex IV, CIV), a multisubunit enzyme composed of 14 subunits. The complex is composed of a catalytic core of 3 subunits MT-CO1, MT-CO2 and MT-CO3, encoded in the mitochondrial DNA, and 11 supernumerary subunits COX4I, COX5A, COX5B, COX6A, COX6B, COX6C, COX7A, COX7B, COX7C, COX8 and NDUFA4, which are encoded in the nuclear genome. The complex exists as a monomer or a dimer and forms supercomplexes (SCs) in the inner mitochondrial membrane with NADH-ubiquinone oxidoreductase (complex I, CI) and ubiquinol-cytochrome c oxidoreductase (cytochrome b-c1 complex, complex III, CIII), resulting in different assemblies (supercomplex SCI(1)III(2)IV(1) and megacomplex MCI(2)III(2)IV(2)). Found in a complex with TMEM177, COA6, COX18, COX20, SCO1 and SCO2. Interacts with TMEM177 in a COX20-dependent manner. Interacts with COX20. Interacts with COX16. Requires Cu cation as cofactor.

The protein resides in the mitochondrion inner membrane. It catalyses the reaction 4 Fe(II)-[cytochrome c] + O2 + 8 H(+)(in) = 4 Fe(III)-[cytochrome c] + 2 H2O + 4 H(+)(out). Its function is as follows. Component of the cytochrome c oxidase, the last enzyme in the mitochondrial electron transport chain which drives oxidative phosphorylation. The respiratory chain contains 3 multisubunit complexes succinate dehydrogenase (complex II, CII), ubiquinol-cytochrome c oxidoreductase (cytochrome b-c1 complex, complex III, CIII) and cytochrome c oxidase (complex IV, CIV), that cooperate to transfer electrons derived from NADH and succinate to molecular oxygen, creating an electrochemical gradient over the inner membrane that drives transmembrane transport and the ATP synthase. Cytochrome c oxidase is the component of the respiratory chain that catalyzes the reduction of oxygen to water. Electrons originating from reduced cytochrome c in the intermembrane space (IMS) are transferred via the dinuclear copper A center (CU(A)) of subunit 2 and heme A of subunit 1 to the active site in subunit 1, a binuclear center (BNC) formed by heme A3 and copper B (CU(B)). The BNC reduces molecular oxygen to 2 water molecules using 4 electrons from cytochrome c in the IMS and 4 protons from the mitochondrial matrix. The protein is Cytochrome c oxidase subunit 2 (mt-co2) of Danio rerio (Zebrafish).